The primary structure comprises 422 residues: Synaptotagmin-15 (422 aa).

At 1-4 the chain is on the extracellular side; that stretch reads MAEQ. Residues 5–27 traverse the membrane as a helical; Signal-anchor for type III membrane protein segment; sequence LALVIGCIIGGLLLLIGISCCLW. Topologically, residues 28–422 are cytoplasmic; the sequence is KRLCTTFTYE…WHALCRPMEP (395 aa). C2 domains lie at 148 to 267 and 279 to 400; these read CLGR…VIWR and EFGD…EHWN.

It belongs to the synaptotagmin family. Homodimer.

It is found in the membrane. Functionally, may be involved in the trafficking and exocytosis of secretory vesicles in non-neuronal tissues. This Rattus norvegicus (Rat) protein is Synaptotagmin-15 (Syt15).